The following is a 187-amino-acid chain: Large ribosomal subunit protein uL22 (187 aa).

Residues 159-171 are compositionally biased toward basic and acidic residues; it reads VSKPTDDAAPKVK. The interval 159 to 187 is disordered; sequence VSKPTDDAAPKVKKESKRKQRRQLARGEF. Over residues 172–187 the composition is skewed to basic residues; that stretch reads KESKRKQRRQLARGEF.

It belongs to the universal ribosomal protein uL22 family.

The sequence is that of Large ribosomal subunit protein uL22 (rpl-17) from Caenorhabditis elegans.